The following is a 196-amino-acid chain: Holliday junction branch migration complex subunit RuvA (196 aa).

The segment at 1 to 63 (MINKICGKIV…EDEIRLFGFL (63 aa)) is domain I. Positions 64–135 (NVSEREVFEK…KLRGKLVKVN (72 aa)) are domain II. Residues 135–138 (NEAS) are flexible linker. The domain III stretch occupies residues 139 to 196 (SGVLKFKELEQSIVNMGFDRKLVAAAIKEIMLIDEFLMLRQVDQEQFLFREILRKLSG).

It belongs to the RuvA family. As to quaternary structure, homotetramer. Forms an RuvA(8)-RuvB(12)-Holliday junction (HJ) complex. HJ DNA is sandwiched between 2 RuvA tetramers; dsDNA enters through RuvA and exits via RuvB. An RuvB hexamer assembles on each DNA strand where it exits the tetramer. Each RuvB hexamer is contacted by two RuvA subunits (via domain III) on 2 adjacent RuvB subunits; this complex drives branch migration. In the full resolvosome a probable DNA-RuvA(4)-RuvB(12)-RuvC(2) complex forms which resolves the HJ.

The protein localises to the cytoplasm. Functionally, the RuvA-RuvB-RuvC complex processes Holliday junction (HJ) DNA during genetic recombination and DNA repair, while the RuvA-RuvB complex plays an important role in the rescue of blocked DNA replication forks via replication fork reversal (RFR). RuvA specifically binds to HJ cruciform DNA, conferring on it an open structure. The RuvB hexamer acts as an ATP-dependent pump, pulling dsDNA into and through the RuvAB complex. HJ branch migration allows RuvC to scan DNA until it finds its consensus sequence, where it cleaves and resolves the cruciform DNA. The protein is Holliday junction branch migration complex subunit RuvA of Borrelia turicatae (strain 91E135).